Reading from the N-terminus, the 179-residue chain is Large ribosomal subunit protein uL5 (179 aa).

This sequence belongs to the universal ribosomal protein uL5 family. Part of the 50S ribosomal subunit; part of the 5S rRNA/L5/L18/L25 subcomplex. Contacts the 5S rRNA and the P site tRNA. Forms a bridge to the 30S subunit in the 70S ribosome.

This is one of the proteins that bind and probably mediate the attachment of the 5S RNA into the large ribosomal subunit, where it forms part of the central protuberance. In the 70S ribosome it contacts protein S13 of the 30S subunit (bridge B1b), connecting the 2 subunits; this bridge is implicated in subunit movement. Contacts the P site tRNA; the 5S rRNA and some of its associated proteins might help stabilize positioning of ribosome-bound tRNAs. This chain is Large ribosomal subunit protein uL5, found in Shouchella clausii (strain KSM-K16) (Alkalihalobacillus clausii).